Consider the following 391-residue polypeptide: 2-deoxy-scyllo-inosose synthase (391 aa).

NAD(+) is bound by residues aspartate 42, glutamate 73–lysine 76, glycine 105–asparagine 109, threonine 129–threonine 130, serine 140–lysine 142, and lysine 151–asparagine 152. Lysine 142 is an active-site residue. Co(2+) is bound at residue glutamate 184. Glutamate 244 is an active-site residue. Co(2+)-binding residues include histidine 247 and histidine 263.

The protein belongs to the sugar phosphate cyclases superfamily. DOI synthase family. NAD(+) is required as a cofactor. Co(2+) serves as cofactor.

The catalysed reaction is D-glucose 6-phosphate = 2-deoxy-L-scyllo-inosose + phosphate. It participates in metabolic intermediate biosynthesis; 2-deoxystreptamine biosynthesis; 2-deoxystreptamine from D-glucose 6-phosphate: step 1/4. Its pathway is antibiotic biosynthesis; ribostamycin biosynthesis. In terms of biological role, catalyzes the intramolecular carbocycle formation from D-glucose-6-phosphate to 2-deoxy-scyllo-inosose (DOI). The sequence is that of 2-deoxy-scyllo-inosose synthase (rbmA) from Streptomyces ribosidificus.